The following is an 89-amino-acid chain: Late cornified envelope protein 3A (89 aa).

2 stretches are compositionally biased toward low complexity: residues 1 to 10 (MSCQQNQQQC) and 17 to 46 (PAKS…SERS). 2 disordered regions span residues 1–46 (MSCQ…SERS) and 62–89 (CQSS…AGCC).

It belongs to the LCE family. As to quaternary structure, interacts with CYSRT1; the interaction is direct. Skin-specific. Expression was readily detected in adult trunk skin, adult arm skin, fetal skin, penal skin, vulva, esophagus and tongue. Not expressed in the cervix, rectum, lung, colon, or placenta.

Functionally, a structural component of the cornified envelope of the stratum corneum involved in innate cutaneous host defense. Possesses defensin-like antimicrobial activity against a broad spectrum of Gram-positive and Gram-negative bacteria, both aerobic and anaerobic species. Upon inflammation, may regulate skin barrier repair by shaping cutaneous microbiota composition and immune response to bacterial antigens. The chain is Late cornified envelope protein 3A from Homo sapiens (Human).